The sequence spans 424 residues: Histidine--tRNA ligase (424 aa).

The protein belongs to the class-II aminoacyl-tRNA synthetase family. In terms of assembly, homodimer.

The protein localises to the cytoplasm. It catalyses the reaction tRNA(His) + L-histidine + ATP = L-histidyl-tRNA(His) + AMP + diphosphate + H(+). The chain is Histidine--tRNA ligase (hisS) from Bacillus subtilis (strain 168).